Here is a 522-residue protein sequence, read N- to C-terminus: Maturase K (522 aa).

This sequence belongs to the intron maturase 2 family. MatK subfamily.

It localises to the plastid. The protein localises to the chloroplast. Functionally, usually encoded in the trnK tRNA gene intron. Probably assists in splicing its own and other chloroplast group II introns. The chain is Maturase K from Iris sanguinea (Japanese iris).